A 154-amino-acid chain; its full sequence is 17 kDa surface antigen (154 aa).

Residues 1–19 (MKLLSKIMIIALAASMLQA) form the signal peptide. Cysteine 20 carries the N-palmitoyl cysteine lipid modification. Cysteine 20 carries S-diacylglycerol cysteine lipidation.

Belongs to the rickettsiale 17 kDa surface antigen family.

It localises to the cell outer membrane. This is 17 kDa surface antigen (omp) from Rickettsia rhipicephali.